We begin with the raw amino-acid sequence, 365 residues long: Aminomethyltransferase (365 aa).

Belongs to the GcvT family. As to quaternary structure, the glycine cleavage system is composed of four proteins: P, T, L and H.

It catalyses the reaction N(6)-[(R)-S(8)-aminomethyldihydrolipoyl]-L-lysyl-[protein] + (6S)-5,6,7,8-tetrahydrofolate = N(6)-[(R)-dihydrolipoyl]-L-lysyl-[protein] + (6R)-5,10-methylene-5,6,7,8-tetrahydrofolate + NH4(+). The glycine cleavage system catalyzes the degradation of glycine. The sequence is that of Aminomethyltransferase from Yersinia pestis bv. Antiqua (strain Antiqua).